Here is a 143-residue protein sequence, read N- to C-terminus: Nucleoside diphosphate kinase (143 aa).

Residues Lys11, Phe59, Arg87, Thr93, Arg104, and Asn114 each contribute to the ATP site. Residue His117 is the Pros-phosphohistidine intermediate of the active site.

Belongs to the NDK family. Homotetramer. It depends on Mg(2+) as a cofactor.

It localises to the cytoplasm. The catalysed reaction is a 2'-deoxyribonucleoside 5'-diphosphate + ATP = a 2'-deoxyribonucleoside 5'-triphosphate + ADP. It carries out the reaction a ribonucleoside 5'-diphosphate + ATP = a ribonucleoside 5'-triphosphate + ADP. Major role in the synthesis of nucleoside triphosphates other than ATP. The ATP gamma phosphate is transferred to the NDP beta phosphate via a ping-pong mechanism, using a phosphorylated active-site intermediate. The polypeptide is Nucleoside diphosphate kinase (Pseudoalteromonas translucida (strain TAC 125)).